Reading from the N-terminus, the 332-residue chain is MNKIDFVVTWVDGGDPIWQAKKAKYSGAVDTSKNSMNSVKAYRDWGTFKYWFRGVEKFAPWVNKVYLVTDQQKPSWLDINSEKLVLVDHTEIICNDYLPVFSANPIESNIHRIPGLSEHFVFFNDDMYLTAPVEPTDFFSEDGLPKYNTALSPIIPERYGTGNFQVNDMEIVTSYFSRNEILKNGQFFDPKQGLKSIVKSLLYRNSQFICGFWESHLPYPLLRSTMNLVWEKEKAVLERTSASRFRNPSDTNVWLFKYWQIASGKYAIGNPKLGGLFSLDNAGPDFWKILNSGKYQIMCINDGFNIQDEEQVMTDFIKAMDQLLPDRSSFEI.

The protein belongs to the stealth family.

This is Receptor polysaccharide phosphotransferase WefC (wefC) from Streptococcus oralis.